Reading from the N-terminus, the 351-residue chain is Rhodopsin (351 aa).

The Extracellular portion of the chain corresponds to 1–36; it reads MNGTEGPFFYIPMVNTTGIVRSPYEYPQYYLVNPAA. 2 N-linked (GlcNAc...) asparagine glycosylation sites follow: Asn2 and Asn15. The helical transmembrane segment at 37-61 threads the bilayer; sequence YAILGAYMFFLIIVGFPVNFMTLYV. The Cytoplasmic segment spans residues 62–73; the sequence is TLEHKKLRTPLN. Residues 74-96 traverse the membrane as a helical segment; sequence YILLNLAVADLFMVIGGFTTTMY. Topologically, residues 97–110 are extracellular; it reads TSMHGYFVLGRLGC. An intrachain disulfide couples Cys110 to Cys187. The helical transmembrane segment at 111–133 threads the bilayer; sequence NLEGFFATLGGMISLWSLAVLAI. The short motif at 134–136 is the 'Ionic lock' involved in activated form stabilization element; it reads ERW. The Cytoplasmic segment spans residues 134–152; sequence ERWVVVCKPISNFRFGENH. The helical transmembrane segment at 153-173 threads the bilayer; the sequence is AIMGVSLTWGMALACTVPPLV. The Extracellular portion of the chain corresponds to 174–202; it reads GWSRYIPEGMQCSCGIDYYTRAEGFNNES. N-linked (GlcNAc...) asparagine glycosylation occurs at Asn200. The helical transmembrane segment at 203–224 threads the bilayer; that stretch reads FVLYMFFCHFTIPLTIIFFCYG. The Cytoplasmic portion of the chain corresponds to 225-252; the sequence is RLLCAVKEAAAAQQESETTQRAEREVTR. The helical transmembrane segment at 253-274 threads the bilayer; the sequence is MVIIMVIGFLVCWLPYASVAWF. Over 275–286 the chain is Extracellular; sequence IFTHQGSEFGPL. A helical membrane pass occupies residues 287–308; the sequence is FMTIPAFFAKSSSIYNPMIYIC. Lys296 carries the N6-(retinylidene)lysine modification. The Cytoplasmic segment spans residues 309-351; that stretch reads MNKQFRHCMITTLFCGKNPFEGEEEGASSTKTEASSASSVSPA. The S-palmitoyl cysteine moiety is linked to residue Cys323. Residues 330–351 form a disordered region; it reads GEEEGASSTKTEASSASSVSPA. A compositionally biased stretch (low complexity) spans 335 to 351; it reads ASSTKTEASSASSVSPA.

The protein belongs to the G-protein coupled receptor 1 family. Opsin subfamily. Post-translationally, phosphorylated on some or all of the serine and threonine residues present in the C-terminal region. In terms of processing, contains one covalently linked retinal chromophore.

Its subcellular location is the membrane. The protein localises to the cell projection. The protein resides in the cilium. It is found in the photoreceptor outer segment. In terms of biological role, photoreceptor required for image-forming vision at low light intensity. While most salt water fish species use retinal as chromophore, most freshwater fish use 3-dehydroretinal, or a mixture of retinal and 3-dehydroretinal. Light-induced isomerization of 11-cis to all-trans retinal triggers a conformational change that activates signaling via G-proteins. Subsequent receptor phosphorylation mediates displacement of the bound G-protein alpha subunit by arrestin and terminates signaling. The chain is Rhodopsin (rho) from Sargocentron diadema (Crown squirrelfish).